A 113-amino-acid polypeptide reads, in one-letter code: UPF0212 protein AF_0282 (113 aa).

It belongs to the UPF0212 family.

This Archaeoglobus fulgidus (strain ATCC 49558 / DSM 4304 / JCM 9628 / NBRC 100126 / VC-16) protein is UPF0212 protein AF_0282.